A 572-amino-acid polypeptide reads, in one-letter code: Myb-like protein Y (572 aa).

Over residues 196–211 the composition is skewed to polar residues; the sequence is QSQSQLPTATNNNNKQ. A disordered region spans residues 196 to 283; it reads QSQSQLPTAT…NNNNNNNNNE (88 aa). 2 stretches are compositionally biased toward low complexity: residues 222-237 and 260-281; these read TATA…TTTT and NDNN…NNNN. Residues 311 to 360 form the Myb-like domain; the sequence is PWTVEDQKKLEDALTKYPPSRFSSVSRWQMVSKELGISPKAVALRYNQML. Residues 367–456 form a disordered region; sequence KPSLQQQQQQ…TTVTPNMTTP (90 aa). Composition is skewed to low complexity over residues 371 to 392 and 414 to 425; these read QQQQ…TTTT and SSFSSPSSSSKE. Basic and acidic residues predominate over residues 426 to 435; the sequence is SPNKKEKTTH. Low complexity predominate over residues 436–455; it reads DTTTTTNTATTTTVTPNMTT.

This is Myb-like protein Y (mybY) from Dictyostelium discoideum (Social amoeba).